Here is a 240-residue protein sequence, read N- to C-terminus: 1-(5-phosphoribosyl)-5-[(5-phosphoribosylamino)methylideneamino] imidazole-4-carboxamide isomerase (240 aa).

The active-site Proton acceptor is the Asp-8. Asp-129 (proton donor) is an active-site residue.

It belongs to the HisA/HisF family.

The protein localises to the cytoplasm. It carries out the reaction 1-(5-phospho-beta-D-ribosyl)-5-[(5-phospho-beta-D-ribosylamino)methylideneamino]imidazole-4-carboxamide = 5-[(5-phospho-1-deoxy-D-ribulos-1-ylimino)methylamino]-1-(5-phospho-beta-D-ribosyl)imidazole-4-carboxamide. Its pathway is amino-acid biosynthesis; L-histidine biosynthesis; L-histidine from 5-phospho-alpha-D-ribose 1-diphosphate: step 4/9. In Clostridioides difficile (strain 630) (Peptoclostridium difficile), this protein is 1-(5-phosphoribosyl)-5-[(5-phosphoribosylamino)methylideneamino] imidazole-4-carboxamide isomerase.